The sequence spans 78 residues: UPF0248 protein Msed_0897 (78 aa).

It belongs to the UPF0248 family.

In Metallosphaera sedula (strain ATCC 51363 / DSM 5348 / JCM 9185 / NBRC 15509 / TH2), this protein is UPF0248 protein Msed_0897.